We begin with the raw amino-acid sequence, 375 residues long: MSAPVGIPSLLLALCALLCVLNAVRSAYCPDPYKRYSDQHSYCVGVCCSCAKYRRGVSPWLKKELVRLHNNLRSKVAGGKSHSVDHLPRATNMLEMVWDDELAEVAQRWSDKCERKSDCEDCRRVGRFGVGQIIFEFDGKMDGKDMENEFFSRFMALQSFRKEQVARFTAGTNPKTAQILWAKTWRIGCGFLDFNYPGNGRRYTQIVCNYGPKGNEEGEEVYKAGSVCSSCPANTCCGDACKKHNLKANYHGLCKVIDENLPPEGNVPHKKTGNEVFYCGFNDESDCRHTVEGVDRWIRNVTTGGTWLNTYLGNYGHTVIEVRSAHHLQVRQAMPGHQDPQWTHGGRTTLSVPAVRGFGGGRQILNLTHLPPCRR.

Positions 1-26 (MSAPVGIPSLLLALCALLCVLNAVRS) are cleaved as a signal peptide. Positions 66–210 (VRLHNNLRSK…RRYTQIVCNY (145 aa)) constitute an SCP domain. Residues N300 and N366 are each glycosylated (N-linked (GlcNAc...) asparagine).

It belongs to the CRISP family. Venom allergen 5-like subfamily. In terms of processing, contains 9 disulfide bonds. As to expression, expressed by the venom gland.

The protein localises to the secreted. The protein is Venom allergen 5 of Lycosa singoriensis (Wolf spider).